The chain runs to 461 residues: Siroheme synthase (461 aa).

The precorrin-2 dehydrogenase /sirohydrochlorin ferrochelatase stretch occupies residues 1–204; that stretch reads MRYLPLFVYL…GNFRKANRVI (204 aa). NAD(+)-binding positions include 22–23 and 43–44; these read IV and KT. Position 128 is a phosphoserine (Ser-128). Positions 218–461 are uroporphyrinogen-III C-methyltransferase; sequence GSVSLVGAGP…HNEISWFGNG (244 aa). Pro-227 provides a ligand contact to S-adenosyl-L-methionine. The Proton acceptor role is filled by Asp-250. Lys-272 serves as the catalytic Proton donor. S-adenosyl-L-methionine-binding positions include 303–305, Ile-308, Met-386, and Gly-415; that span reads GGD.

In the N-terminal section; belongs to the precorrin-2 dehydrogenase / sirohydrochlorin ferrochelatase family. It in the C-terminal section; belongs to the precorrin methyltransferase family.

It catalyses the reaction uroporphyrinogen III + 2 S-adenosyl-L-methionine = precorrin-2 + 2 S-adenosyl-L-homocysteine + H(+). The catalysed reaction is precorrin-2 + NAD(+) = sirohydrochlorin + NADH + 2 H(+). It carries out the reaction siroheme + 2 H(+) = sirohydrochlorin + Fe(2+). The protein operates within cofactor biosynthesis; adenosylcobalamin biosynthesis; precorrin-2 from uroporphyrinogen III: step 1/1. It functions in the pathway cofactor biosynthesis; adenosylcobalamin biosynthesis; sirohydrochlorin from precorrin-2: step 1/1. Its pathway is porphyrin-containing compound metabolism; siroheme biosynthesis; precorrin-2 from uroporphyrinogen III: step 1/1. It participates in porphyrin-containing compound metabolism; siroheme biosynthesis; siroheme from sirohydrochlorin: step 1/1. The protein operates within porphyrin-containing compound metabolism; siroheme biosynthesis; sirohydrochlorin from precorrin-2: step 1/1. In terms of biological role, multifunctional enzyme that catalyzes the SAM-dependent methylations of uroporphyrinogen III at position C-2 and C-7 to form precorrin-2 via precorrin-1. Then it catalyzes the NAD-dependent ring dehydrogenation of precorrin-2 to yield sirohydrochlorin. Finally, it catalyzes the ferrochelation of sirohydrochlorin to yield siroheme. The chain is Siroheme synthase from Blochmanniella floridana.